The primary structure comprises 529 residues: Peptide chain release factor 3 (529 aa).

One can recognise a tr-type G domain in the interval 11-280; that stretch reads SKRRTFAIIS…GLTDWAPAPL (270 aa). GTP-binding positions include 20–27, 88–92, and 142–145; these read SHPDAGKT, DTPGH, and NKLD.

This sequence belongs to the TRAFAC class translation factor GTPase superfamily. Classic translation factor GTPase family. PrfC subfamily.

The protein resides in the cytoplasm. Its function is as follows. Increases the formation of ribosomal termination complexes and stimulates activities of RF-1 and RF-2. It binds guanine nucleotides and has strong preference for UGA stop codons. It may interact directly with the ribosome. The stimulation of RF-1 and RF-2 is significantly reduced by GTP and GDP, but not by GMP. This chain is Peptide chain release factor 3, found in Vibrio vulnificus (strain YJ016).